We begin with the raw amino-acid sequence, 416 residues long: DNA-guanine transglycosylase (416 aa).

Asp95 (proton acceptor) is an active-site residue. Asp256 acts as the Nucleophile in catalysis. Zn(2+)-binding residues include Cys368, Cys370, Cys373, and His395.

The protein belongs to the DNA-guanine transglycosylase family. Zn(2+) is required as a cofactor.

Functionally, part of the dpd cluster involved in the insertion of 7-deazaguanine derivatives in DNA. DpdA may insert 7-cyano-7-deazaguanine (preQ0) into DNA with the help of DpdB. DpdA and dpdB are necessary and sufficient to synthesize 2'-deoxy-7-cyano-7-deazaguanosine (dPreQ0). The polypeptide is DNA-guanine transglycosylase (Salmonella montevideo).